A 261-amino-acid chain; its full sequence is GTP cyclohydrolase FolE2 (261 aa).

Belongs to the GTP cyclohydrolase IV family.

It carries out the reaction GTP + H2O = 7,8-dihydroneopterin 3'-triphosphate + formate + H(+). It participates in cofactor biosynthesis; 7,8-dihydroneopterin triphosphate biosynthesis; 7,8-dihydroneopterin triphosphate from GTP: step 1/1. Its function is as follows. Converts GTP to 7,8-dihydroneopterin triphosphate. The chain is GTP cyclohydrolase FolE2 from Herminiimonas arsenicoxydans.